A 213-amino-acid polypeptide reads, in one-letter code: Protein Flattop (213 aa).

The tract at residues 127–213 (VDQPAEQSKI…HNSRPASQEK (87 aa)) is disordered. Polar residues predominate over residues 151–213 (QHIQDQSRPA…HNSRPASQEK (63 aa)).

This sequence belongs to the Flattop family.

It is found in the cytoplasm. It localises to the cytoskeleton. Its subcellular location is the cilium basal body. The protein localises to the cell projection. The protein resides in the cilium. It is found in the apical cell membrane. It localises to the cilium axoneme. Functionally, microtubule inner protein (MIP) part of the dynein-decorated doublet microtubules (DMTs) in cilia axoneme. Acts as a regulator of cilium basal body docking and positioning in mono- and multiciliated cells. Regulates basal body docking and cilia formation in multiciliated lung cells. Regulates kinocilium positioning and stereocilia bundle morphogenesis in the inner ear. In Danio rerio (Zebrafish), this protein is Protein Flattop.